We begin with the raw amino-acid sequence, 922 residues long: MNMSLSRIVKAAPLRRTTLAMALGALGAAPAAYADWNNQSIIKAGERQHGIHIKQSDGAGVRTATGTTIKVSGRQAQGVLLENPAAELRFQNGSVTSSGQLFDEGVRRFLGTVTVKAGKLVADHATLANVSDTRDDDGIALYVAGEQAQASIADSTLQGAGGVRVERGANVTVQRSTIVDGGLHIGTLQPLQPEDLPPSRVVLGDTSVTAVPASGAPAAVFVFGANELTVDGGHITGGRAAGVAAMDGAIVHLQRATIRRGDAPAGGAVPGGAVPGGAVPGGFGPLLDGWYGVDVSDSTVDLAQSIVEAPQLGAAIRAGRGARVTVSGGSLSAPHGNVIETGGGARRFPPPASPLSITLQAGARAQGRALLYRVLPEPVKLTLAGGAQGQGDIVATELPPIPGASSGPLDVALASQARWTGATRAVDSLSIDNATWVMTDNSNVGALRLASDGSVDFQQPAEAGRFKVLMVDTLAGSGLFRMNVFADLGLSDKLVVMRDASGQHRLWVRNSGSEPASGNTMLLVQTPRGSAATFTLANKDGKVDIGTYRYRLAANGNGQWSLVGAKAPPAPKPAPQPGPQPGPQPPQPPQPPQPPQPPQPPQRQPEAPAPQPPAGRELSAAANAAVNTGGVGLASTLWYAESNALSKRLGELRLNPDAGGAWGRGFAQRQQLDNRAGRRFDQKVAGFELGADHAVAVAGGRWHLGGLAGYTRGDRGFTGDGGGHTDSVHVGGYATYIANSGFYLDATLRASRLENDFKVAGSDGYAVKGKYRTHGVGVSLEAGRRFAHADGWFLEPQAELAVFRVGGGAYRAANGLRVRDEGGSSVLGRLGLEVGKRIELAGGRQVQPYIKASVLQEFDGAGTVRTNGIAHRTELRGTRAELGLGMAAALGRGHSLYASYEYSKGPKLAMPWTFHAGYRYSW.

The first 34 residues, 1–34 (MNMSLSRIVKAAPLRRTTLAMALGALGAAPAAYA), serve as a signal peptide directing secretion. Residues 260–262 (RGD) carry the Cell attachment site; involved in adhesion to various eukaryotic cell lines motif. Tandem repeats lie at residues 266–270 (GGAVP), 271–275 (GGAVP), and 276–280 (GGAVP). The 4 X 5 AA tandem repeats of G-G-A-V-P stretch occupies residues 266 to 290 (GGAVPGGAVPGGAVPGGFGPLLDGW). One copy of the 4; approximate repeat lies at 281-285 (GGFGP). The segment at 561–619 (SLVGAKAPPAPKPAPQPGPQPGPQPPQPPQPPQPPQPPQPPQRQPEAPAPQPPAGRELS) is disordered. Residues 568–613 (PPAPKPAPQPGPQPGPQPPQPPQPPQPPQPPQPPQRQPEAPAPQPP) show a composition bias toward pro residues. The segment at 575-603 (PQPGPQPGPQPPQPPQPPQPPQPPQPPQR) is 9 X 3 AA approximate repeats of P-Q-P. In terms of domain architecture, Autotransporter spans 654–922 (LNPDAGGAWG…TFHAGYRYSW (269 aa)).

As to quaternary structure, monomer.

Its subcellular location is the periplasm. It is found in the secreted. It localises to the cell surface. The protein resides in the cell outer membrane. Agglutinogen that binds to eukaryotic cells; a process mediated by the R-G-D sequence. Pertactin may have a role in bacterial adhesion, and thus play a role in virulence. May contribute to the disease state of whooping cough. This chain is Pertactin autotransporter (prn), found in Bordetella parapertussis (strain 12822 / ATCC BAA-587 / NCTC 13253).